Consider the following 175-residue polypeptide: Glucagon family neuropeptides (175 aa).

Positions 1–23 (MSGNVYKTLLTLLVYGLIMHCNV) are cleaved as a signal peptide. A propeptide spanning residues 24–80 (YCSPDRWTPVPGAKLEEEVYDEDGNTLQDFALRAGAPGGGGPRPRWGRCTALYYPPG) is cleaved from the precursor. The segment at 149–157 (VKKYLAAVL) is important for receptor binding. A Leucine amide modification is found at L157. Position 168 is a lysine amide (K168). Residues 172-175 (VAYL) constitute a propeptide that is removed on maturation.

This sequence belongs to the glucagon family.

The protein localises to the secreted. Primary role of GRF is to release GH from the pituitary. Its function is as follows. PACAP is a neuropeptide involved in diverse array of physiological processes through activating the PACAP subfamily of class B1 G protein-coupled receptors: VIP receptor 1 (VIPR1), VIP receptor 2 (VIPR2), and PACAP type I receptor (ADCYAP1R1). Exerts neuroprotective and general cytoprotective effects due to anti-apoptotic, anti-inflammatory, and antioxidant actions. Promotes neuron projection development through the RAPGEF2/Rap1/B-Raf/ERK pathway. In chromaffin cells, induces long-lasting increase of intracellular calcium concentrations and neuroendocrine secretion. Involved in the control of glucose homeostasis, induces insulin secretion by pancreatic beta cells. PACAP exists in two bioactive forms from proteolysis of the same precursor protein, PACAP27 and PACAP38, which differ by eleven amino acid residues in the C-terminus. In Gallus gallus (Chicken), this protein is Glucagon family neuropeptides (ADCYAP1).